Reading from the N-terminus, the 203-residue chain is Peptidoglycan-recognition protein SA (203 aa).

Residues M1 to A26 form the signal peptide. 2 cysteine pairs are disulfide-bonded: C37/C160 and C74/C80. The region spanning R59–G186 is the N-acetylmuramoyl-L-alanine amidase domain. Peptidoglycan binding regions lie at residues M87 to Y90 and F97 to Y102.

This sequence belongs to the N-acetylmuramoyl-L-alanine amidase 2 family. In terms of tissue distribution, in larvae, it is expressed in fat body. Also expressed in uninduced hemocytes and mbn-2 cells.

It is found in the secreted. It catalyses the reaction N-acetyl-D-glucosaminyl-N-acetylmuramoyl-L-alanyl-meso-2,6-diaminoheptanedioyl-D-alanine + H2O = N-acetyl-D-glucosaminyl-N-acetylmuramoyl-L-alanyl-meso-2,6-diaminoheptanedioate + D-alanine. Peptidoglycan-recognition protein that plays a key role in innate immunity by binding to peptidoglycans (PGN) of Gram-positive bacteria and activating the Toll pathway upstream of spz activating enzyme SPE. Has no activity against Gram-negative bacteria and fungi. Shows some partial redundancy with PRPGP-SD in Gram-positive bacteria recognition. May act by forming a complex with GNBP1 that activates the proteolytic cleavage of Spatzle and the subsequent activation of Toll pathway. Binds to diaminopimelic acid-type tetrapeptide PGN (DAP-type PGN) and lysine-type PGN (Lys-type PGN). Has some L,D-carboxypeptidase activity for DAP-type PGN, which are specific to prokaryotes, but not for Lys-type PGN. This Drosophila melanogaster (Fruit fly) protein is Peptidoglycan-recognition protein SA (PGRP-SA).